Here is a 473-residue protein sequence, read N- to C-terminus: Photosystem II CP43 reaction center protein (473 aa).

A propeptide spanning residues 1 to 14 is cleaved from the precursor; that stretch reads MKTLYSLRRFYHVE. Residue Thr-15 is modified to N-acetylthreonine. Residue Thr-15 is modified to Phosphothreonine. Transmembrane regions (helical) follow at residues 69-93, 134-155, 178-200, 255-275, and 291-312; these read LFEV…PHLA, LLGP…KDRN, KALY…RKIT, KPFA…LSYS, and WFNN…ASQA. Glu-367 lines the [CaMn4O5] cluster pocket. A helical membrane pass occupies residues 447–471; sequence RARAAAAGFEKGIDRDFEPVLSMTP.

It belongs to the PsbB/PsbC family. PsbC subfamily. As to quaternary structure, PSII is composed of 1 copy each of membrane proteins PsbA, PsbB, PsbC, PsbD, PsbE, PsbF, PsbH, PsbI, PsbJ, PsbK, PsbL, PsbM, PsbT, PsbX, PsbY, PsbZ, Psb30/Ycf12, at least 3 peripheral proteins of the oxygen-evolving complex and a large number of cofactors. It forms dimeric complexes. It depends on Binds multiple chlorophylls and provides some of the ligands for the Ca-4Mn-5O cluster of the oxygen-evolving complex. It may also provide a ligand for a Cl- that is required for oxygen evolution. PSII binds additional chlorophylls, carotenoids and specific lipids. as a cofactor.

It localises to the plastid. Its subcellular location is the chloroplast thylakoid membrane. In terms of biological role, one of the components of the core complex of photosystem II (PSII). It binds chlorophyll and helps catalyze the primary light-induced photochemical processes of PSII. PSII is a light-driven water:plastoquinone oxidoreductase, using light energy to abstract electrons from H(2)O, generating O(2) and a proton gradient subsequently used for ATP formation. The polypeptide is Photosystem II CP43 reaction center protein (Crucihimalaya wallichii (Rock-cress)).